Here is a 288-residue protein sequence, read N- to C-terminus: Nucleotide-binding protein Neut_1559 (288 aa).

ATP is bound at residue 8-15; that stretch reads GLSGSGKS. GTP is bound at residue 57-60; it reads DMRS.

Belongs to the RapZ-like family.

Displays ATPase and GTPase activities. This Nitrosomonas eutropha (strain DSM 101675 / C91 / Nm57) protein is Nucleotide-binding protein Neut_1559.